Here is a 110-residue protein sequence, read N- to C-terminus: Vacuolar ATPase assembly integral membrane protein VMA21 (110 aa).

The tract at residues 1–28 is disordered; it reads MTTRRIIGQDGEEKTYLDVDPRGPPGPS. Residues 1–44 are Cytoplasmic-facing; it reads MTTRRIIGQDGEEKTYLDVDPRGPPGPSNISPAVPASVIWKLMS. Residues 11-21 are compositionally biased toward basic and acidic residues; it reads GEEKTYLDVDP. Residues 45–65 form a helical membrane-spanning segment; that stretch reads FTFAMITLPIGTYFFTVNYVF. The Lumenal segment spans residues 66-71; the sequence is GGNATY. Residues 72–92 traverse the membrane as a helical segment; that stretch reads AGALAAIMANVVLIAYVIMAF. The Cytoplasmic portion of the chain corresponds to 93–110; that stretch reads KDDQAEQAEDAREAKKEL. The Prevents secretion from ER signature appears at 107-110; that stretch reads KKEL.

This sequence belongs to the VMA21 family.

The protein resides in the endoplasmic reticulum membrane. Its subcellular location is the endoplasmic reticulum-Golgi intermediate compartment membrane. It is found in the cytoplasmic vesicle. The protein localises to the COPII-coated vesicle membrane. In terms of biological role, required for the assembly of the V0 complex of the vacuolar ATPase (V-ATPase) in the endoplasmic reticulum. This chain is Vacuolar ATPase assembly integral membrane protein VMA21, found in Phaeosphaeria nodorum (strain SN15 / ATCC MYA-4574 / FGSC 10173) (Glume blotch fungus).